A 333-amino-acid polypeptide reads, in one-letter code: Acyl-CoA wax alcohol acyltransferase 2 (333 aa).

The next 3 helical transmembrane spans lie at 15–35, 38–58, and 130–150; these read VFAV…VIAV, YLVV…WLAF, and IFPG…MPFL.

The protein belongs to the diacylglycerol acyltransferase family. As to quaternary structure, monomer. In terms of tissue distribution, highly expressed in skin, where it is primarily restricted to undifferentiated peripheral sebocytes. Also expressed at lower level in other tissues except pancreas.

The protein localises to the endoplasmic reticulum membrane. The enzyme catalyses a long chain fatty alcohol + a fatty acyl-CoA = a wax ester + CoA. The catalysed reaction is all-trans-retinol + an acyl-CoA = an all-trans-retinyl ester + CoA. It catalyses the reaction an acyl-CoA + a 1,2-diacyl-sn-glycerol = a triacyl-sn-glycerol + CoA. It carries out the reaction 11-cis-retinol + a fatty acyl-CoA = 11-cis-retinyl ester + CoA. The enzyme catalyses 9-cis-retinol + a fatty acyl-CoA = 9-cis-retinyl ester + CoA. The catalysed reaction is 13-cis-retinol + a fatty acyl-CoA = 13-cis-retinyl ester + CoA. It catalyses the reaction a 1-acylglycerol + an acyl-CoA = a 1,2-diacylglycerol + CoA. It carries out the reaction 1-O-alkylglycerol + an acyl-CoA = 1-O-alkyl-3-acylglycerol + CoA. The enzyme catalyses a 2-acylglycerol + an acyl-CoA = a 1,2-diacyl-sn-glycerol + CoA. The catalysed reaction is 2-(9Z-octadecenoyl)-glycerol + hexadecanoyl-CoA = 1-hexadecanoyl-2-(9Z-octadecenoyl)-sn-glycerol + CoA. It catalyses the reaction 1,2-di-(9Z-octadecenoyl)-sn-glycerol + hexadecanoyl-CoA = 1,2-di-(9Z)-octadecenoyl-3-hexadecanoyl-sn-glycerol + CoA. It carries out the reaction hexadecan-1-ol + hexadecanoyl-CoA = hexadecanyl hexadecanoate + CoA. The enzyme catalyses hexadecane-1,2-diol + hexadecanoyl-CoA = 2-hydroxyhexadecyl hexadecanoate + CoA. The catalysed reaction is 9-cis-retinol + hexadecanoyl-CoA = 9-cis-retinyl hexadecanoate + CoA. It catalyses the reaction all-trans-retinol + hexadecanoyl-CoA = all-trans-retinyl hexadecanoate + CoA. It carries out the reaction 1,2-di-(9Z-octadecenoyl)-sn-glycerol + (9Z)-octadecenoyl-CoA = 1,2,3-tri-(9Z-octadecenoyl)-glycerol + CoA. The enzyme catalyses hexadecan-1-ol + (9Z)-octadecenoyl-CoA = hexadecanyl (9Z)-octadecenoate + CoA. The catalysed reaction is (9Z)-hexadecen-1-ol + (9Z)-octadecenoyl-CoA = 1-O-(9Z)-hexadecenyl (9Z)-octadecenoate + CoA. It catalyses the reaction octadecan-1-ol + (9Z)-octadecenoyl-CoA = 1-O-octadecyl (9Z)-octadecenoate + CoA. It carries out the reaction (9Z)-octadecen-1-ol + (9Z)-octadecenoyl-CoA = 1-O-(9Z)-octadecenyl (9Z)-octadecenoate + CoA. The enzyme catalyses hexadecan-1-ol + (9Z)-hexadecenoyl-CoA = 1-O-hexadecyl (9Z)-hexadecenoate + CoA. The catalysed reaction is hexadecan-1-ol + octadecanoyl-CoA = hexadecanyl octadecanoate + CoA. It catalyses the reaction 11-cis-retinol + hexadecanoyl-CoA = 11-cis-retinyl hexadecanoate + CoA. It carries out the reaction 1-O-(9Z-octadecenyl)-glycerol + (9Z)-octadecenoyl-CoA = 1-O-(9Z-octadecyl)-3-(9Z-octadecenoyl)-glycerol + CoA. The enzyme catalyses 1-(9Z-octadecenoyl)-glycerol + (9Z)-octadecenoyl-CoA = 1,2-di-(9Z-octadecenoyl)-glycerol + CoA. The catalysed reaction is 11-cis-retinol + tetradecanoyl-CoA = 11-cis-retinyl tetradecanoate + CoA. It catalyses the reaction 9-cis-retinol + tetradecanoyl-CoA = 9-cis-retinyl tetradecanoate + CoA. It carries out the reaction 13-cis-retinol + tetradecanoyl-CoA = 13-cis-retinyl tetradecanoate + CoA. The enzyme catalyses all-trans-retinol + tetradecanoyl-CoA = all-trans-retinyl tetradecanoate + CoA. The catalysed reaction is tetradecan-1-ol + tetradecanoyl-CoA = tetradecanyl tetradecanoate + CoA. With respect to regulation, 11-cis retinoids act as allosteric modulators of acyl-CoA retinol O-fatty-acyltransferase (ARAT) activity by suppressing esterification of 9-cis, 13-cis, or all-trans retinols concurrently increasing the enzyme specificity toward 11-cis isomer. Its function is as follows. Acyltransferase that catalyzes the formation of ester bonds between fatty alcohols and fatty acyl-CoAs to form wax monoesters. Shows a preference for medium chain acyl-CoAs from C12 to C16 in length and fatty alcohols shorter than C20, as the acyl donors and acceptors, respectively. Also possesses acyl-CoA retinol acyltransferase (ARAT) activity that preferentially esterifies 11-cis-retinol, a chromophore precursor of bleached opsin pigments in cone cells. Shows higher catalytic efficiency toward 11-cis-retinol versus 9-cis-retinol, 13-cis-retinol, and all-trans-retinol substrates. In Homo sapiens (Human), this protein is Acyl-CoA wax alcohol acyltransferase 2 (AWAT2).